An 802-amino-acid polypeptide reads, in one-letter code: MGHPPLEFSDCYLDSPDFRERLKCYEQELERTNKFIKDVIKDGSALISAMRSYSSAVQKFSQTLQSFQFDFIGDTLTDDEINIAESFKEFAELLNEVENERMMMVQNASDLLIKPLETFRKEQIGFTKERKKKFEKDGERFYSLLDRHLHLSSKKKESQLLEADLQVDKERHNFFESSLDYVYQIQEVQESKKFNIVEPVLAFLHSLFISNSLTVELTQDFLPYKQQLQLSLQNTRNHFSSTREEMEELKKRMKEAPQTCKLPGQPTIEGYLYTQEKWALGISWVKYYCRYEKETRTLTMTPTEQKPGAKQGPVDLTLKYCVRRKTESIDKRFCFDIEANERTGTITLQAPSEANRRLWMEAMDGKEPIYHSPITKQEEMELNEVGFKFVRKCINFIETKGIKTEGLYRTVGSNIQVQKLLNAFFDPKCPGDVDFYNSDWDIKTITSSLKFYLRNLSEPVMTYKLHKELVSAAKSDNLDYRLGAIHSLVYKLPEKNREMLELLIKHLVNVCEHSKENLMTPSNMGVIFGPTLMRAQEDTVAAMMNIKFQNIVVEILIEHFGKIYLGPPEDSQVPPVPPPRVTARRHKPITISKRLLREKAVFYTPSLDDVEDEIHHPTPNGTIASNLDPPKQLQHLKLPMQKSGEMDPGRKSPSRPVSDCQTEPCLEADMGKLVYRLQDGGTKAIPKASNGPVPGSGHTKTSSFHIKRPAPRPIVHHKEGDTDCFSKVRPPGEKQTIIRPPVRPPDPPCRSSTSQKPESKPETVSSNAEEIPSSVVASRTRFFETASRKTGSSQGKLPGDES.

One can recognise a PH domain in the interval 265 to 368 (QPTIEGYLYT…WMEAMDGKEP (104 aa)). The Rho-GAP domain occupies 380 to 564 (MELNEVGFKF…ILIEHFGKIY (185 aa)). 2 disordered regions span residues 641 to 663 (QKSGEMDPGRKSPSRPVSDCQTE) and 682 to 802 (TKAI…GDES). The segment covering 716–732 (HHKEGDTDCFSKVRPPG) has biased composition (basic and acidic residues). Residues 751-768 (SSTSQKPESKPETVSSNA) are compositionally biased toward polar residues.

In terms of assembly, interacts with HOMER1. Interacts with AMPA receptor complexes. Interacts with SH3GL2 (endophilin-A1). Interacts (via C-terminus) with NR1D1. As to expression, high expression in brain, particularly in the cerebellum, hippocampus, thalamus, frontal lobes, sensory cortex. Found in the myelin sheaths of peripheral nerves, chromaffin cells within the adrenal medulla, and in extra-adrenal chromaffin cells associated with celiac ganglia.

Its subcellular location is the postsynapse. The protein localises to the presynapse. It localises to the cell projection. It is found in the axon. The protein resides in the dendritic spine. Its subcellular location is the dendrite. The protein localises to the cytoplasm. Stimulates GTP hydrolysis of members of the Rho family. Its action on RHOA activity and signaling is implicated in growth and stabilization of dendritic spines, and therefore in synaptic function, in hippocampal neurons. Critical for the stabilization of AMPA receptors at postsynaptic sites. Critical for the regulation of synaptic vesicle endocytosis at pre-synaptic terminals. Required for the localization of NR1D1 to dendrites, can suppress its repressor activity and protect it from proteasomal degradation. This chain is Oligophrenin-1 (Ophn1), found in Rattus norvegicus (Rat).